Here is a 1372-residue protein sequence, read N- to C-terminus: DNA-directed RNA polymerase subunit beta'' (1372 aa).

Positions 252, 321, 328, and 331 each coordinate Zn(2+).

It belongs to the RNA polymerase beta' chain family. RpoC2 subfamily. In plastids the minimal PEP RNA polymerase catalytic core is composed of four subunits: alpha, beta, beta', and beta''. When a (nuclear-encoded) sigma factor is associated with the core the holoenzyme is formed, which can initiate transcription. Requires Zn(2+) as cofactor.

The protein localises to the plastid. It is found in the organellar chromatophore. The enzyme catalyses RNA(n) + a ribonucleoside 5'-triphosphate = RNA(n+1) + diphosphate. DNA-dependent RNA polymerase catalyzes the transcription of DNA into RNA using the four ribonucleoside triphosphates as substrates. The polypeptide is DNA-directed RNA polymerase subunit beta'' (Paulinella chromatophora).